Reading from the N-terminus, the 389-residue chain is Cytochrome b (389 aa).

The next 4 helical transmembrane spans lie at 32–52 (FGSL…FLAM), 76–98 (WIVR…AHIG), 113–133 (LWSI…LGYV), and 179–199 (FFSL…AHFM). Heme b contacts are provided by His82 and His96. Heme b is bound by residues His183 and His197. His202 is a binding site for a ubiquinone. 4 consecutive transmembrane segments (helical) span residues 225-245 (FIFK…VIVF), 289-309 (LLGV…PLTD), 321-341 (AMKF…WLGS), and 348-368 (YLEI…VIVP).

This sequence belongs to the cytochrome b family. Fungal cytochrome b-c1 complex contains 10 subunits; 3 respiratory subunits, 2 core proteins and 5 low-molecular weight proteins. Cytochrome b-c1 complex is a homodimer. It depends on heme b as a cofactor.

It localises to the mitochondrion inner membrane. In terms of biological role, component of the ubiquinol-cytochrome c reductase complex (complex III or cytochrome b-c1 complex) that is part of the mitochondrial respiratory chain. The b-c1 complex mediates electron transfer from ubiquinol to cytochrome c. Contributes to the generation of a proton gradient across the mitochondrial membrane that is then used for ATP synthesis. The chain is Cytochrome b (COB) from Strobilurus tenacellus.